A 383-amino-acid chain; its full sequence is Lipid-A-disaccharide synthase (383 aa).

The protein belongs to the LpxB family.

The catalysed reaction is a lipid X + a UDP-2-N,3-O-bis[(3R)-3-hydroxyacyl]-alpha-D-glucosamine = a lipid A disaccharide + UDP + H(+). The protein operates within bacterial outer membrane biogenesis; LPS lipid A biosynthesis. In terms of biological role, condensation of UDP-2,3-diacylglucosamine and 2,3-diacylglucosamine-1-phosphate to form lipid A disaccharide, a precursor of lipid A, a phosphorylated glycolipid that anchors the lipopolysaccharide to the outer membrane of the cell. The polypeptide is Lipid-A-disaccharide synthase (Trichlorobacter lovleyi (strain ATCC BAA-1151 / DSM 17278 / SZ) (Geobacter lovleyi)).